A 492-amino-acid chain; its full sequence is Catalase (492 aa).

Residues His65 and Asn138 contribute to the active site. Tyr348 is a heme binding site.

Belongs to the catalase family. As to quaternary structure, homotetramer. It depends on heme as a cofactor.

Its subcellular location is the cytoplasm. It localises to the cytosol. The protein localises to the peroxisome matrix. The catalysed reaction is 2 H2O2 = O2 + 2 H2O. Functionally, catalyzes the degradation of hydrogen peroxide (H(2)O(2)) generated by peroxisomal oxidases to water and oxygen, thereby protecting cells from the toxic effects of hydrogen peroxide. In Helianthus annuus (Common sunflower), this protein is Catalase.